The sequence spans 210 residues: RNA binding protein, mRNA processing factor 2 (210 aa).

Residues 1–10 (MSNLKPDVEH) are compositionally biased toward basic and acidic residues. Residues 1-25 (MSNLKPDVEHCTGAGTGTGTGPSGP) are disordered. Ser-2 carries the N-acetylserine modification. Positions 31–108 (RTLFVSGLPV…QTLRLEFAKA (78 aa)) constitute an RRM domain. An important for homodimerization region spans residues 41–51 (DIKPRELYLLF).

As to quaternary structure, homodimer. Interacts with EEF2.

It is found in the cytoplasm. Its subcellular location is the nucleus. The protein resides in the stress granule. RNA-binding protein involved in the regulation of smooth muscle cell differentiation and proliferation in the gastrointestinal system. Binds NOG mRNA, the major inhibitor of the bone morphogenetic protein (BMP) pathway. Mediates an increase of NOG mRNA levels, thereby contributing to the negative regulation of BMP signaling pathway and promoting reversible dedifferentiation and proliferation of smooth muscle cells. Acts as a pre-mRNA alternative splicing regulator. Mediates ACTN1 and FLNB alternative splicing. Likely binds to mRNA tandem CAC trinucleotide or CA dinucleotide motifs. In Rattus norvegicus (Rat), this protein is RNA binding protein, mRNA processing factor 2 (Rbpms2).